The chain runs to 322 residues: uncharacterized protein (322 aa).

The segment at 1–63 is disordered; the sequence is MFKIRKRSVP…DEASSSDSHY (63 aa). The span at 34–49 shows a compositional bias: basic and acidic residues; sequence FVDDHGKPIAEYRDFP. The C3H1-type zinc finger occupies 245 to 274; sequence WKVDRICTYYINRPDKCTRGDNCRFKHDDV. The segment at 278-322 is disordered; it reads HRQKEIQSSRNQSWHHRTSSHKYSSENSDHRGYRRHRSRSPHARQ. Residues 309-322 show a composition bias toward basic residues; it reads GYRRHRSRSPHARQ.

This is an uncharacterized protein from Caenorhabditis elegans.